The sequence spans 503 residues: Cytochrome P450 3A9 (503 aa).

Cys-442 contributes to the heme binding site.

The protein belongs to the cytochrome P450 family. Heme serves as cofactor. As to expression, mainly expressed in olfactory epithelium.

It is found in the endoplasmic reticulum membrane. Its subcellular location is the microsome membrane. It catalyses the reaction an organic molecule + reduced [NADPH--hemoprotein reductase] + O2 = an alcohol + oxidized [NADPH--hemoprotein reductase] + H2O + H(+). Functionally, this isozyme seems to be implicated in olfaction. Active in the demethylation of erythromycin as well as benzphetamine. This is Cytochrome P450 3A9 (Cyp3a9) from Rattus norvegicus (Rat).